Consider the following 451-residue polypeptide: Phosphoglucosamine mutase (451 aa).

Catalysis depends on Ser-101, which acts as the Phosphoserine intermediate. Residues Ser-101, Asp-240, Asp-242, and Asp-244 each coordinate Mg(2+). Ser-101 bears the Phosphoserine mark.

Belongs to the phosphohexose mutase family. Requires Mg(2+) as cofactor. In terms of processing, activated by phosphorylation.

It carries out the reaction alpha-D-glucosamine 1-phosphate = D-glucosamine 6-phosphate. Functionally, catalyzes the conversion of glucosamine-6-phosphate to glucosamine-1-phosphate. The protein is Phosphoglucosamine mutase of Streptococcus pyogenes serotype M18 (strain MGAS8232).